We begin with the raw amino-acid sequence, 453 residues long: GTPase Der (453 aa).

EngA-type G domains follow at residues 3–167 (PIIV…ISEK) and 187–360 (IKVA…EDSK). Residues 9–16 (GRTNVGKS), 57–61 (DTAGL), 119–122 (NKID), 193–200 (GRPNVGKS), 240–244 (DTAGA), and 305–308 (NKCD) contribute to the GTP site. In terms of domain architecture, KH-like spans 361 to 445 (RKISTSTLIK…PIQIQFKDNE (85 aa)).

Belongs to the TRAFAC class TrmE-Era-EngA-EngB-Septin-like GTPase superfamily. EngA (Der) GTPase family. In terms of assembly, associates with the 50S ribosomal subunit.

Its function is as follows. GTPase that plays an essential role in the late steps of ribosome biogenesis. This chain is GTPase Der, found in Buchnera aphidicola subsp. Acyrthosiphon pisum (strain 5A).